The chain runs to 217 residues: Large ribosomal subunit protein uL3 (217 aa).

The tract at residues 129 to 162 (SRGPMSHGSKNHRAPGSTGAGTTPGRIYPGKRMA) is disordered. Low complexity predominate over residues 142 to 153 (APGSTGAGTTPG).

It belongs to the universal ribosomal protein uL3 family. As to quaternary structure, part of the 50S ribosomal subunit. Forms a cluster with proteins L14 and L19.

In terms of biological role, one of the primary rRNA binding proteins, it binds directly near the 3'-end of the 23S rRNA, where it nucleates assembly of the 50S subunit. The sequence is that of Large ribosomal subunit protein uL3 from Prochlorococcus marinus (strain MIT 9215).